The primary structure comprises 144 residues: D-aminoacyl-tRNA deacylase (144 aa).

Positions glycine 136–proline 137 match the Gly-cisPro motif, important for rejection of L-amino acids motif.

It belongs to the DTD family. In terms of assembly, homodimer.

It is found in the cytoplasm. The enzyme catalyses glycyl-tRNA(Ala) + H2O = tRNA(Ala) + glycine + H(+). It catalyses the reaction a D-aminoacyl-tRNA + H2O = a tRNA + a D-alpha-amino acid + H(+). An aminoacyl-tRNA editing enzyme that deacylates mischarged D-aminoacyl-tRNAs. Also deacylates mischarged glycyl-tRNA(Ala), protecting cells against glycine mischarging by AlaRS. Acts via tRNA-based rather than protein-based catalysis; rejects L-amino acids rather than detecting D-amino acids in the active site. By recycling D-aminoacyl-tRNA to D-amino acids and free tRNA molecules, this enzyme counteracts the toxicity associated with the formation of D-aminoacyl-tRNA entities in vivo and helps enforce protein L-homochirality. In Corynebacterium glutamicum (strain R), this protein is D-aminoacyl-tRNA deacylase.